Here is a 525-residue protein sequence, read N- to C-terminus: Peptide chain release factor 3 (525 aa).

The tr-type G domain occupies Ala-9–Gln-276. GTP is bound by residues Ser-18 to Thr-25, Asp-86 to His-90, and Asn-140 to Asp-143.

Belongs to the TRAFAC class translation factor GTPase superfamily. Classic translation factor GTPase family. PrfC subfamily.

The protein localises to the cytoplasm. In terms of biological role, increases the formation of ribosomal termination complexes and stimulates activities of RF-1 and RF-2. It binds guanine nucleotides and has strong preference for UGA stop codons. It may interact directly with the ribosome. The stimulation of RF-1 and RF-2 is significantly reduced by GTP and GDP, but not by GMP. This Francisella tularensis subsp. novicida (strain U112) protein is Peptide chain release factor 3.